Reading from the N-terminus, the 410-residue chain is D-amino acid dehydrogenase (410 aa).

9–14 (GGGIVG) provides a ligand contact to FAD.

This sequence belongs to the DadA oxidoreductase family. The cofactor is FAD.

It localises to the cell inner membrane. It catalyses the reaction a D-alpha-amino acid + a quinone + H2O = a 2-oxocarboxylate + a quinol + NH4(+). Its function is as follows. Catalyzes the oxidative deamination of D-amino acids. Has broad substrate specificity; is mostly active on D-proline, and to a lesser extent, on several other D-amino acids such as D-alanine, D-phenylalanine and D-serine. Mediates electron transport from D-proline to coenzyme Q1 in vitro, and is involved in the electron transport chain from D-proline to the c-type cytochrome in vivo. In Helicobacter pylori (strain J99 / ATCC 700824) (Campylobacter pylori J99), this protein is D-amino acid dehydrogenase.